Here is a 916-residue protein sequence, read N- to C-terminus: Cadherin-4 (916 aa).

The first 20 residues, 1 to 20 (MTAGAGVLLLLLSLSGALRA), serve as a signal peptide directing secretion. A propeptide spanning residues 21-169 (HNEDLTTRET…NANGLRRRKR (149 aa)) is cleaved from the precursor. The interval 124 to 168 (TSSPHSGHKPQKGKKVVALDPSPPPKDTLLPWPQHQNANGLRRRK) is disordered. A compositionally biased stretch (basic residues) spans 129–138 (SGHKPQKGKK). 5 Cadherin domains span residues 170–277 (DWVI…RPEF), 278–392 (INQV…PPEF), 393–507 (TAST…APYF), 508–613 (PSNH…DNAP), and 614–724 (ELLP…TIGA). The Extracellular segment spans residues 170–734 (DWVIPPINVP…VAAAGLGTGA (565 aa)). N-linked (GlcNAc...) asparagine glycans are attached at residues Asn-283, Asn-412, Asn-557, Asn-632, Asn-661, and Asn-702. A helical transmembrane segment spans residues 735–756 (IVAILICILILLTMVLLFVMWM). Over 757 to 916 (KRREKERHTK…ADMYGGGEED (160 aa)) the chain is Cytoplasmic. Residues 806-838 (MGHVPSKAPGVRRVDERPVGAEPQYPIRPMVPH) are disordered.

As to expression, expressed mainly in brain but also found in other tissues.

Its subcellular location is the cell membrane. Functionally, cadherins are calcium-dependent cell adhesion proteins. They preferentially interact with themselves in a homophilic manner in connecting cells; cadherins may thus contribute to the sorting of heterogeneous cell types. May play an important role in retinal development. The sequence is that of Cadherin-4 (CDH4) from Homo sapiens (Human).